The primary structure comprises 308 residues: tRNA dimethylallyltransferase (308 aa).

11–18 (GSTATGKS) contacts ATP. Residue 13–18 (TATGKS) participates in substrate binding. The tract at residues 36–39 (DSVQ) is interaction with substrate tRNA.

This sequence belongs to the IPP transferase family. In terms of assembly, monomer. It depends on Mg(2+) as a cofactor.

It carries out the reaction adenosine(37) in tRNA + dimethylallyl diphosphate = N(6)-dimethylallyladenosine(37) in tRNA + diphosphate. In terms of biological role, catalyzes the transfer of a dimethylallyl group onto the adenine at position 37 in tRNAs that read codons beginning with uridine, leading to the formation of N6-(dimethylallyl)adenosine (i(6)A). The polypeptide is tRNA dimethylallyltransferase (Bdellovibrio bacteriovorus (strain ATCC 15356 / DSM 50701 / NCIMB 9529 / HD100)).